The chain runs to 364 residues: Putative methylthioribose-1-phosphate isomerase (364 aa).

Residues 57–59, R100, and Q206 each bind substrate; that span reads RGA. D247 (proton donor) is an active-site residue. 257-258 serves as a coordination point for substrate; sequence NK.

The protein belongs to the eIF-2B alpha/beta/delta subunits family. MtnA subfamily.

The enzyme catalyses 5-(methylsulfanyl)-alpha-D-ribose 1-phosphate = 5-(methylsulfanyl)-D-ribulose 1-phosphate. Its function is as follows. Catalyzes the interconversion of methylthioribose-1-phosphate (MTR-1-P) into methylthioribulose-1-phosphate (MTRu-1-P). The sequence is that of Putative methylthioribose-1-phosphate isomerase from Pyrococcus horikoshii (strain ATCC 700860 / DSM 12428 / JCM 9974 / NBRC 100139 / OT-3).